The chain runs to 479 residues: Glutamate--tRNA ligase (479 aa).

The short motif at 11–21 (PSPTGYLHIGG) is the 'HIGH' region element. Cys108, Cys110, Cys135, and Glu137 together coordinate Zn(2+). Residues 250 to 254 (KLSKR) carry the 'KMSKS' region motif. Position 253 (Lys253) interacts with ATP.

It belongs to the class-I aminoacyl-tRNA synthetase family. Glutamate--tRNA ligase type 1 subfamily. As to quaternary structure, monomer. Zn(2+) serves as cofactor.

Its subcellular location is the cytoplasm. The enzyme catalyses tRNA(Glu) + L-glutamate + ATP = L-glutamyl-tRNA(Glu) + AMP + diphosphate. Functionally, catalyzes the attachment of glutamate to tRNA(Glu) in a two-step reaction: glutamate is first activated by ATP to form Glu-AMP and then transferred to the acceptor end of tRNA(Glu). This is Glutamate--tRNA ligase from Myxococcus xanthus (strain DK1622).